A 389-amino-acid chain; its full sequence is Succinate--CoA ligase [ADP-forming] subunit beta (389 aa).

The 236-residue stretch at 9–244 (KKLFADYGLP…LTQEDPREAE (236 aa)) folds into the ATP-grasp domain. ATP contacts are provided by residues Lys-46, 53-55 (GRG), Glu-99, Ala-102, and Glu-107. Positions 199 and 213 each coordinate Mg(2+). Substrate-binding positions include Asn-264 and 321–323 (GIV).

The protein belongs to the succinate/malate CoA ligase beta subunit family. As to quaternary structure, heterotetramer of two alpha and two beta subunits. It depends on Mg(2+) as a cofactor.

The catalysed reaction is succinate + ATP + CoA = succinyl-CoA + ADP + phosphate. It carries out the reaction GTP + succinate + CoA = succinyl-CoA + GDP + phosphate. The protein operates within carbohydrate metabolism; tricarboxylic acid cycle; succinate from succinyl-CoA (ligase route): step 1/1. Succinyl-CoA synthetase functions in the citric acid cycle (TCA), coupling the hydrolysis of succinyl-CoA to the synthesis of either ATP or GTP and thus represents the only step of substrate-level phosphorylation in the TCA. The beta subunit provides nucleotide specificity of the enzyme and binds the substrate succinate, while the binding sites for coenzyme A and phosphate are found in the alpha subunit. This chain is Succinate--CoA ligase [ADP-forming] subunit beta, found in Histophilus somni (strain 2336) (Haemophilus somnus).